Reading from the N-terminus, the 182-residue chain is Type-1 fimbrial protein, A chain (182 aa).

An N-terminal signal peptide occupies residues 1–23; it reads MKIKTLAIVVLSALSLSSTAALA. An intrachain disulfide couples C44 to C84.

Belongs to the fimbrial protein family.

It localises to the fimbrium. Fimbriae (also called pili), polar filaments radiating from the surface of the bacterium to a length of 0.5-1.5 micrometers and numbering 100-300 per cell, enable bacteria to colonize the epithelium of specific host organs. The sequence is that of Type-1 fimbrial protein, A chain (fimA) from Escherichia coli (strain K12).